Reading from the N-terminus, the 445-residue chain is Phosphoglucosamine mutase (445 aa).

Catalysis depends on serine 101, which acts as the Phosphoserine intermediate. The Mg(2+) site is built by serine 101, aspartate 240, aspartate 242, and aspartate 244. Serine 101 carries the post-translational modification Phosphoserine.

This sequence belongs to the phosphohexose mutase family. Requires Mg(2+) as cofactor. Post-translationally, activated by phosphorylation.

The enzyme catalyses alpha-D-glucosamine 1-phosphate = D-glucosamine 6-phosphate. Catalyzes the conversion of glucosamine-6-phosphate to glucosamine-1-phosphate. The chain is Phosphoglucosamine mutase from Pseudomonas fluorescens (strain ATCC BAA-477 / NRRL B-23932 / Pf-5).